We begin with the raw amino-acid sequence, 201 residues long: NAD(P)H-dependent FMN reductase ntnL (201 aa).

Residues arginine 12, 90–93 (EYNG), and tyrosine 120 each bind FMN.

As to quaternary structure, homodimer.

The catalysed reaction is FMNH2 + NADP(+) = FMN + NADPH + 2 H(+). It catalyses the reaction FMNH2 + NAD(+) = FMN + NADH + 2 H(+). It participates in secondary metabolite biosynthesis; terpenoid biosynthesis. Its function is as follows. NAD(P)H-dependent FMN reductase; part of the gene cluster that mediates the biosynthesis of the meroterpenoids nectripenoids A and B, as well as cochliquninone D and isocochliquninone E. The pathway probably begins with the HR-PKS ntnH that catalyzes two chain-extension steps to form a reduced triketide, which then primes the SAT domain in the NR-PKS ntnG to initiate three more cycles of extension to give a linear hexaketide corresponding to the polyketide part of nectripenoids. The FAD-dependent monooxygenase ntnJ then performs an oxidative decarboxylation at C11 of the ntnH/ntnG product, via an electrophilic aromatic hydroxylation with concomitant ipso-decarboxylation. The membrane-bound polyprenyl transferase ntnF then introduces a farnesyl group before the FAD-dependent monooxygenase ntnK functions as the first epoxidase on terminal C12'-C13' olefin, followed by a second epoxidation on C7'-C8' catalyzed by ntnA. The terpene cyclase/mutase ntnI then initiates the sequential tricyclic ring formation through protonation of the terminal epoxide and catalyzes the regioselective and stereoselective 6/6/6-tricyclic ring formation. The cytochrome P450 monooxygenase ntnM may then hydroxylate C1'. The polypeptide is NAD(P)H-dependent FMN reductase ntnL (Nectria sp).